Reading from the N-terminus, the 341-residue chain is Delta(1)-pyrroline-2-carboxylate reductase (341 aa).

The active-site Charge relay system is serine 47. Histidine 48 (proton donor) is an active-site residue. Substrate is bound at residue arginine 52. 120–124 (HFSAL) lines the NADP(+) pocket. Substrate is bound at residue threonine 160. An NADP(+)-binding site is contributed by 178-180 (DFA). 186-187 (RG) lines the substrate pocket. The active-site Charge relay system is the glutamate 188. Residues 229–230 (HK) and 305–311 (RLPSERR) contribute to the NADP(+) site.

The protein belongs to the LDH2/MDH2 oxidoreductase family. Homodimer.

It catalyses the reaction L-proline + NAD(+) = 1-pyrroline-2-carboxylate + NADH + H(+). The catalysed reaction is L-proline + NADP(+) = 1-pyrroline-2-carboxylate + NADPH + H(+). Catalyzes the reduction of Delta(1)-pyrroline-2-carboxylate (Pyr2C) to L-proline, using NADPH as the electron donor. Is likely involved in a degradation pathway that converts cis- and trans-3-hydroxy-L-proline (c3LHyp and t3LHyp) to L-proline, which would allow S.novella to grow on c3LHyp or t3LHyp as a sole carbon source. The sequence is that of Delta(1)-pyrroline-2-carboxylate reductase from Ancylobacter novellus (strain ATCC 8093 / DSM 506 / JCM 20403 / CCM 1077 / IAM 12100 / NBRC 12443 / NCIMB 10456) (Starkeya novella).